We begin with the raw amino-acid sequence, 571 residues long: DNA primase (571 aa).

The CHC2-type zinc-finger motif lies at 20–44 (CPFHKEKTPSFQVDTEKGYYHCFGC). The Toprim domain occupies 229-309 (AELVVVEGYM…KFRVRATSVP (81 aa)). The Mg(2+) site is built by Glu-235, Asp-280, and Asp-282.

This sequence belongs to the DnaG primase family. In terms of assembly, monomer. Interacts with DnaB. It depends on Zn(2+) as a cofactor. Mg(2+) serves as cofactor.

The enzyme catalyses ssDNA + n NTP = ssDNA/pppN(pN)n-1 hybrid + (n-1) diphosphate.. RNA polymerase that catalyzes the synthesis of short RNA molecules used as primers for DNA polymerase during DNA replication. This is DNA primase from Deinococcus radiodurans (strain ATCC 13939 / DSM 20539 / JCM 16871 / CCUG 27074 / LMG 4051 / NBRC 15346 / NCIMB 9279 / VKM B-1422 / R1).